A 724-amino-acid polypeptide reads, in one-letter code: Polyribonucleotide nucleotidyltransferase (724 aa).

Asp-488 and Asp-494 together coordinate Mg(2+). Positions 555-614 constitute a KH domain; the sequence is PRMITVKINPEKIRDVIGKGGSTIQALTKETGCTIDIGEDGTITIASTSSEGMAEAKRRI. Positions 624-692 constitute an S1 motif domain; sequence GKIYNGTVLK…EKGRMRLSIK (69 aa). Residues 697-724 form a disordered region; the sequence is EEGDVPVAAPQAPGAGDAASQQQQQQQQ. Over residues 701–724 the composition is skewed to low complexity; the sequence is VPVAAPQAPGAGDAASQQQQQQQQ.

This sequence belongs to the polyribonucleotide nucleotidyltransferase family. Mg(2+) is required as a cofactor.

It is found in the cytoplasm. The catalysed reaction is RNA(n+1) + phosphate = RNA(n) + a ribonucleoside 5'-diphosphate. Its function is as follows. Involved in mRNA degradation. Catalyzes the phosphorolysis of single-stranded polyribonucleotides processively in the 3'- to 5'-direction. The chain is Polyribonucleotide nucleotidyltransferase from Ralstonia pickettii (strain 12J).